An 87-amino-acid chain; its full sequence is Toxin CsEv2 (87 aa).

The first 19 residues, M1–A19, serve as a signal peptide directing secretion. Positions K20–S85 constitute an LCN-type CS-alpha/beta domain. Intrachain disulfides connect C31-C84, C35-C60, C44-C65, and C48-C67.

This sequence belongs to the long (4 C-C) scorpion toxin superfamily. Sodium channel inhibitor family. Beta subfamily. As to expression, expressed by the venom gland.

Its subcellular location is the secreted. Functionally, beta toxins bind voltage-independently at site-4 of sodium channels (Nav) and shift the voltage of activation toward more negative potentials thereby affecting sodium channel activation and promoting spontaneous and repetitive firing. Induces immediate paralysis in crickets after injection, with a total paralysis occurring within 15-30 minutes and lasting for 1-2 hours. Is also lethal to vertebrate (chicks) when injected in very high dosages (more that 100 mg/kg). This is Toxin CsEv2 from Centruroides sculpturatus (Arizona bark scorpion).